The sequence spans 84 residues: Sulfur carrier protein TusA (84 aa).

Catalysis depends on Cys-19, which acts as the Cysteine persulfide intermediate.

Belongs to the sulfur carrier protein TusA family. In terms of assembly, interacts with IscS.

It is found in the cytoplasm. Its pathway is tRNA modification. Its function is as follows. Sulfur carrier protein involved in sulfur trafficking in the cell. Part of a sulfur-relay system required for 2-thiolation during synthesis of 2-thiouridine of the modified wobble base 5-methylaminomethyl-2-thiouridine (mnm(5)s(2)U) in tRNA. Interacts with IscS and stimulates its cysteine desulfurase activity. Accepts an activated sulfur from IscS, which is then transferred to TusD, and thus determines the direction of sulfur flow from IscS to 2-thiouridine formation. Also appears to be involved in sulfur transfer for the biosynthesis of molybdopterin. In Proteus mirabilis (strain HI4320), this protein is Sulfur carrier protein TusA.